The chain runs to 130 residues: Small ribosomal subunit protein uS9 (130 aa).

It belongs to the universal ribosomal protein uS9 family.

This chain is Small ribosomal subunit protein uS9, found in Clostridium perfringens (strain ATCC 13124 / DSM 756 / JCM 1290 / NCIMB 6125 / NCTC 8237 / Type A).